The following is an 88-amino-acid chain: Protein MATERNALLY EXPRESSED GENE 1 (88 aa).

An N-terminal signal peptide occupies residues 1-27 (MEYKKRVDALVFFSLLLLGYFAAHAHG). Asn36 carries an N-linked (GlcNAc...) asparagine glycan. 2 cysteine pairs are disulfide-bonded: Cys65/Cys87 and Cys68/Cys76.

It belongs to the MEG family. Post-translationally, glycosylated. Expressed exclusively in endosperm. Found in basal endosperm transfer cells.

The protein resides in the secreted. It localises to the cell wall. It is found in the cell membrane. The protein localises to the extracellular space. Its subcellular location is the extracellular matrix. Its function is as follows. Regulates maternal nutrient uptake, sucrose partitioning, and seed biomass yield. Necessary and sufficient for the establishment and differentiation of the endosperm nutrient transfer cells located at the mother:seed interface. Exclusive expression of the maternal allele at the early stages of endosperm development. The maternal allele is hypomethylated. At later stages, expression becomes biallelic. Regulated by the transcription factor MRP1. This Zea mays (Maize) protein is Protein MATERNALLY EXPRESSED GENE 1 (MEG1).